The following is an 84-amino-acid chain: Beta-defensin 119 (84 aa).

A signal peptide spans 1 to 21 (MKFLFLFLAILLATKIPVISG). 3 disulfide bridges follow: C28–C55, C35–C49, and C39–C56.

It belongs to the beta-defensin family.

It is found in the secreted. Functionally, has antibacterial activity. This chain is Beta-defensin 119 (DEFB119), found in Macaca fascicularis (Crab-eating macaque).